The following is a 471-amino-acid chain: Putative multidrug resistance protein MdtD (471 aa).

The Periplasmic portion of the chain corresponds to 1–11 (MTDLPDNTRWQ). The helical transmembrane segment at 12–32 (LWIVAFGFFMQSLDTTIVNTA) threads the bilayer. The Cytoplasmic segment spans residues 33–48 (LPSMAQSLGESPLHMH). Residues 49–69 (MVIVSYVLTVAVMLPASGWLA) form a helical membrane-spanning segment. The Periplasmic portion of the chain corresponds to 70–76 (DKVGVRN). Residues 77-97 (IFFTAIVLFTLGSLFCALSGT) form a helical membrane-spanning segment. Residues 98–101 (LNEL) lie on the Cytoplasmic side of the membrane. Residues 102-124 (LLARALQGVGGAMMVPVGRLTVM) form a helical membrane-spanning segment. Residues 125–137 (KIVPREQYMAAMT) are Periplasmic-facing. The helical transmembrane segment at 138 to 158 (FVTLPGQVGPLLGPALGGLLV) threads the bilayer. At 159–164 (EYASWH) the chain is on the cytoplasmic side. A helical membrane pass occupies residues 165-185 (WIFLINIPVGIIGAIATLMLM). Residues 186-196 (PNYTMQTRRFD) lie on the Periplasmic side of the membrane. The helical transmembrane segment at 197–217 (LSGFLLLAIGMAVLTLALDGS) threads the bilayer. At 218–224 (KGTGLSP) the chain is on the cytoplasmic side. A helical transmembrane segment spans residues 225–245 (LAITGLVAVGVVALVLYLLHA). Topologically, residues 246–262 (RNNNRALFSLKLFRTRT) are periplasmic. The chain crosses the membrane as a helical span at residues 263–283 (FSLGLAGSFAGRIGSGMLPFM). Residues 284–285 (TP) lie on the Cytoplasmic side of the membrane. Residues 286–306 (VFLQIGLGFSPFHAGLMMIPM) traverse the membrane as a helical segment. The Periplasmic portion of the chain corresponds to 307-341 (VLGSMGMKRIVVQVVNRFGYRRVLVATTLGLSLVT). The helical transmembrane segment at 342–362 (LLFMTTALLGWYYVLPFVLFL) threads the bilayer. The Cytoplasmic portion of the chain corresponds to 363–395 (QGMVNSTRFSSMNTLTLKDLPDNLASSGNSLLS). The helical transmembrane segment at 396-416 (MIMQLSMSIGVTIAGLLLGLF) threads the bilayer. Residues 417–430 (GSQHVSVDSGTTQT) lie on the Periplasmic side of the membrane. Residues 431–451 (VFMYTWLSMAFIIALPAFIFA) traverse the membrane as a helical segment. Topologically, residues 452–471 (RVPNDTHQNVAISRRKRSAQ) are cytoplasmic.

It belongs to the major facilitator superfamily. TCR/Tet family.

It localises to the cell inner membrane. In Escherichia coli O17:K52:H18 (strain UMN026 / ExPEC), this protein is Putative multidrug resistance protein MdtD.